A 1605-amino-acid polypeptide reads, in one-letter code: Zinc finger protein jing homolog (1605 aa).

Positions 1–15 (MQHQSLSVRNSSGIS) are enriched in polar residues. Disordered stretches follow at residues 1 to 28 (MQHQ…VRSS), 60 to 117 (QWPW…QQSN), 359 to 388 (TRKV…TSDP), 441 to 468 (QQHQ…TQAQ), 856 to 877 (STTS…PPKL), 917 to 947 (TKAT…ASCT), and 991 to 1213 (NDSG…TDFL). Residues 64-117 (NTSNNTNATNSNNVQSNNNSSTATSNSSTNSNNSPAVNTPTTQNQSQPTTQQSN) are compositionally biased toward low complexity. The segment covering 991–1000 (NDSGIVANSS) has biased composition (polar residues). A compositionally biased stretch (basic and acidic residues) spans 1021–1030 (PQKKDEESRQ). The segment covering 1035–1049 (SPVPSPSPLSEPPVI) has biased composition (pro residues). 2 stretches are compositionally biased toward acidic residues: residues 1053 to 1090 (SEPE…DEPH) and 1099 to 1110 (SSEAVELPELED). Pro residues predominate over residues 1112-1126 (QPSPPLPCELPPPPT). Positions 1135–1149 (LSLPPSQKSPKSLLL) are enriched in low complexity. Residues 1165–1201 (QESMSSDQDYSNQSPLDESSPTGSAEPSESQRSTTPV) are compositionally biased toward polar residues. The C2H2-type 1 zinc finger occupies 1260-1285 (GVCYWSNCDAQFDTSSKLLDHLQIQH). The C2H2-type 2; degenerate zinc finger occupies 1293 to 1320 (FACLWDGCKVHNKESCSRRWLERHVLSH). The segment at 1326–1350 (HKCIVAGCGMRFGSQLALEKHVNHH) adopts a C2H2-type 3 zinc-finger fold. Disordered stretches follow at residues 1352–1371 (NNTD…LPKV) and 1511–1605 (CSRS…SSTS). Low complexity-rich tracts occupy residues 1511-1537 (CSRS…SLIS) and 1556-1605 (KQSY…SSTS).

Belongs to the AEBP2/jing C2H2-type zinc-finger family.

The protein resides in the nucleus. Its function is as follows. May functionally interact with Polycomb group (PcG) and trithorax group (trxG) proteins to repress transcription. The protein is Zinc finger protein jing homolog of Aedes aegypti (Yellowfever mosquito).